The following is a 128-amino-acid chain: Gastrotropin (128 aa).

N-acetylalanine is present on A2.

This sequence belongs to the calycin superfamily. Fatty-acid binding protein (FABP) family.

The protein localises to the cytoplasm. Its subcellular location is the membrane. Functionally, binds to bile acids and is involved in enterohepatic bile acid metabolism. Required for efficient apical to basolateral transport of conjugated bile acids in ileal enterocytes. Stimulates gastric acid and pepsinogen secretion. This chain is Gastrotropin (FABP6), found in Bos taurus (Bovine).